Here is a 552-residue protein sequence, read N- to C-terminus: Carotenoid cleavage dioxygenase 8 homolog A, chloroplastic (552 aa).

The N-terminal 43 residues, 1 to 43, are a transit peptide targeting the chloroplast; it reads MATSLTLIATPCTAPRSSSSFALAPRLPPRCSNATAARRRAVR. The tract at residues 32–73 is disordered; sequence SNATAARRRAVRATTLQSDQEPAGSGDSGATTTKLSASTSVR. Residues 59-72 show a composition bias toward polar residues; it reads SGATTTKLSASTSV. The Fe cation site is built by His239, His289, His356, and His543.

It belongs to the carotenoid oxygenase family. Fe(2+) serves as cofactor. In terms of tissue distribution, highly expressed in panicles, inflorescences and parenchyma cells of the root stele, and at lower levels in shoot apex, leaf buds and xylem parenchyma cells of the stem.

It is found in the plastid. The protein localises to the chloroplast. May be involved in strigolactones biosynthesis. The polypeptide is Carotenoid cleavage dioxygenase 8 homolog A, chloroplastic (CCD8A) (Oryza sativa subsp. japonica (Rice)).